A 154-amino-acid chain; its full sequence is Transcription antitermination protein NusB (154 aa).

This sequence belongs to the NusB family.

Involved in transcription antitermination. Required for transcription of ribosomal RNA (rRNA) genes. Binds specifically to the boxA antiterminator sequence of the ribosomal RNA (rrn) operons. The chain is Transcription antitermination protein NusB from Methylobacillus flagellatus (strain ATCC 51484 / DSM 6875 / VKM B-1610 / KT).